Here is a 471-residue protein sequence, read N- to C-terminus: 6-phosphofructo-2-kinase/fructose-2,6-bisphosphatase 1 (471 aa).

N-acetylserine is present on S2. Positions 2–250 (SREMGELTQT…AYYLMNIHVT (249 aa)) are 6-phosphofructo-2-kinase. S33 is modified (phosphoserine; by PKA). ATP is bound at residue 49-57 (GLPARGKTY). Beta-D-fructose 6-phosphate contacts are provided by R82 and R105. D131 is a catalytic residue. The beta-D-fructose 6-phosphate site is built by T133 and R139. S141 is modified (phosphoserine). C161 is an active-site residue. 170-175 (NIKQVK) contacts ATP. Residues K175, R196, and Y200 each coordinate beta-D-fructose 6-phosphate. The tract at residues 251-471 (PRSIYLCRHG…EALDTVPAHY (221 aa)) is fructose-2,6-bisphosphatase. R258 is a beta-D-fructose 2,6-bisphosphate binding site. The Tele-phosphohistidine intermediate role is filled by H259. Beta-D-fructose 2,6-bisphosphate contacts are provided by N265, G271, and R308. The active-site Proton donor/acceptor is the E328. Positions 339, 353, 357, 368, 394, and 398 each coordinate beta-D-fructose 2,6-bisphosphate. Position 350 to 353 (350 to 353 (FALR)) interacts with ATP. ATP-binding positions include 394 to 398 (QAVMR) and Y430.

In the C-terminal section; belongs to the phosphoglycerate mutase family. As to quaternary structure, homodimer. Liver.

The catalysed reaction is beta-D-fructose 2,6-bisphosphate + H2O = beta-D-fructose 6-phosphate + phosphate. It catalyses the reaction beta-D-fructose 6-phosphate + ATP = beta-D-fructose 2,6-bisphosphate + ADP + H(+). With respect to regulation, phosphorylation at Ser-33 inhibits the kinase and activates the bisphosphatase. Functionally, synthesis and degradation of fructose 2,6-bisphosphate. This Rattus norvegicus (Rat) protein is 6-phosphofructo-2-kinase/fructose-2,6-bisphosphatase 1.